The primary structure comprises 183 residues: ATP synthase subunit b, chloroplastic (183 aa).

The chain crosses the membrane as a helical span at residues 28–48 (DIFEANVINILLLLFGLIYVL).

It belongs to the ATPase B chain family. F-type ATPases have 2 components, F(1) - the catalytic core - and F(0) - the membrane proton channel. F(1) has five subunits: alpha(3), beta(3), gamma(1), delta(1), epsilon(1). F(0) has four main subunits: a(1), b(1), b'(1) and c(10-14). The alpha and beta chains form an alternating ring which encloses part of the gamma chain. F(1) is attached to F(0) by a central stalk formed by the gamma and epsilon chains, while a peripheral stalk is formed by the delta, b and b' chains.

It localises to the plastid. Its subcellular location is the chloroplast thylakoid membrane. In terms of biological role, f(1)F(0) ATP synthase produces ATP from ADP in the presence of a proton or sodium gradient. F-type ATPases consist of two structural domains, F(1) containing the extramembraneous catalytic core and F(0) containing the membrane proton channel, linked together by a central stalk and a peripheral stalk. During catalysis, ATP synthesis in the catalytic domain of F(1) is coupled via a rotary mechanism of the central stalk subunits to proton translocation. Its function is as follows. Component of the F(0) channel, it forms part of the peripheral stalk, linking F(1) to F(0). The polypeptide is ATP synthase subunit b, chloroplastic (Porphyra purpurea (Red seaweed)).